Reading from the N-terminus, the 608-residue chain is Probable methyltransferase PMT3 (608 aa).

Residues 1 to 12 lie on the Cytoplasmic side of the membrane; it reads MKGRSDGGQKKR. Residues 13-33 form a helical; Signal-anchor for type II membrane protein membrane-spanning segment; it reads VIALVCVAAVVLVFVYLFYGS. Over 34–608 the chain is Lumenal; that stretch reads SDHRASAIEY…LTSESLRDME (575 aa). Asparagine 342 carries an N-linked (GlcNAc...) asparagine glycan.

The protein belongs to the methyltransferase superfamily.

It is found in the golgi apparatus membrane. This Arabidopsis thaliana (Mouse-ear cress) protein is Probable methyltransferase PMT3.